A 38-amino-acid polypeptide reads, in one-letter code: U-theraphotoxin-Aju1a (38 aa).

3 disulfide bridges follow: C3–C24, C7–C30, and C16–C35.

Expressed by the venom gland.

Its subcellular location is the secreted. Functionally, has strong antifungal activity against C.albicans MDM8, C.krusei IOC 4559 (MIC=2.5-5 uM), C.glabrata IOC 45658 (MIC=2.5-5 uM), C.albicans IOC 45588 (MIC=2.5-5 uM), C.parapsilosis IOC 456416 (MIC=2.5-5 uM), C.tropicalis IOC 45608 (MIC=2.5-5 uM), C.guilliermondii IOC 455716 (MIC=2.5-5 uM) and A.niger (MIC=5-10 uM). Lacks antifungal activity against B.bassiana. Has no antibacterial effect against Gram-positive bacteria M.luteus, S.epidermidis, S.aureus or against Gram-negative bacteria E.coli and P.aeruginosa. Has no hemolytic activity against human erythrocytes. Probable ion channel inhibitor. The sequence is that of U-theraphotoxin-Aju1a from Avicularia juruensis (Yellow-banded pinktoe).